A 135-amino-acid chain; its full sequence is Interleukin-4 (135 aa).

A signal peptide spans 1–24 (MGLTYQLIPVLVCLLVCTSHLVHG). 3 disulfide bridges follow: C27-C135, C48-C85, and C70-C105. Residue N62 is glycosylated (N-linked (GlcNAc...) asparagine).

Belongs to the IL-4/IL-13 family.

The protein resides in the secreted. Participates in at least several B-cell activation processes as well as of other cell types. It is a costimulator of DNA-synthesis. It induces the expression of class II MHC molecules on resting B-cells. It enhances both secretion and cell surface expression of IgE and IgG1. It also regulates the expression of the low affinity Fc receptor for IgE (CD23) on both lymphocytes and monocytes. Positively regulates IL31RA expression in macrophages. Stimulates autophagy in dendritic cells by interfering with mTORC1 signaling and through the induction of RUFY4. This Bubalus bubalis (Domestic water buffalo) protein is Interleukin-4 (IL4).